A 436-amino-acid chain; its full sequence is MTQLQSLRGMVDLLPEQTRCWQAVESVARDHFRRAGLQEIRTPLLEVTELFARGIGEATDVVGKEMYTFVDRGDRSCTLRPEGTASVVRAALQHGLLSQGPQRLWYGGPMFRYERPQAGRQRQFYQIGVEYLGVGSPRSDAEVIALAWALLVDLGVQGLVLEINSLGTLQDRQKYREELVAWLEARSDQLDDDSRKRLYTNPLRILDSKNPAISELLQDAPTLFEALSVESKARFEEVQVDLEALQIPFQLNPRLVRGLDYYGHTAFEITSDQLGAQATVCGGGRYDGLVEQLGGAPTPAFGWAFGMERLMLLLESAASINPNGSAARLTASTRPDLYVVNRGEQAERVALVIAHQLRAAGLVVELDSSGSAFNKQFKRAGRSRATWALVIGDDEAERGEARLKYLQEATTQANPIPIDQLHRLDDVTGLVRLVRE.

The protein belongs to the class-II aminoacyl-tRNA synthetase family. In terms of assembly, homodimer.

Its subcellular location is the cytoplasm. The enzyme catalyses tRNA(His) + L-histidine + ATP = L-histidyl-tRNA(His) + AMP + diphosphate + H(+). The sequence is that of Histidine--tRNA ligase from Prochlorococcus marinus (strain MIT 9303).